Consider the following 266-residue polypeptide: Adaptin ear-binding coat-associated protein 2 (266 aa).

2 disordered regions span residues 164–191 (SMKKKDGAAGTPRARPTSTGGLSLLPPP) and 244–266 (GDFTKSTGSTSSQTQPGAGWVQF). Serine 181 bears the Phosphoserine mark. A WXXF motif 1 motif is present at residues 243-246 (WGDF). The segment covering 247 to 258 (TKSTGSTSSQTQ) has biased composition (low complexity). The WXXF motif 2 signature appears at 263–266 (WVQF).

Belongs to the NECAP family. In terms of assembly, interacts with AP1G1 and AP2A1 components of the adapter protein complexes AP-1 and AP-2. Interacts with the GAE domain proteins GGA1, GGA2 and GGA3.

The protein resides in the cytoplasmic vesicle. The protein localises to the clathrin-coated vesicle membrane. It localises to the cell membrane. Functionally, involved in endocytosis. This Bos taurus (Bovine) protein is Adaptin ear-binding coat-associated protein 2 (NECAP2).